The sequence spans 346 residues: Histidinol-phosphate aminotransferase (346 aa).

Position 209 is an N6-(pyridoxal phosphate)lysine (lysine 209).

The protein belongs to the class-II pyridoxal-phosphate-dependent aminotransferase family. Histidinol-phosphate aminotransferase subfamily. In terms of assembly, homodimer. The cofactor is pyridoxal 5'-phosphate.

The enzyme catalyses L-histidinol phosphate + 2-oxoglutarate = 3-(imidazol-4-yl)-2-oxopropyl phosphate + L-glutamate. It functions in the pathway amino-acid biosynthesis; L-histidine biosynthesis; L-histidine from 5-phospho-alpha-D-ribose 1-diphosphate: step 7/9. This is Histidinol-phosphate aminotransferase from Aliivibrio fischeri (strain MJ11) (Vibrio fischeri).